We begin with the raw amino-acid sequence, 311 residues long: Putative S-adenosyl-L-methionine-dependent methyltransferase MUL_4761 (311 aa).

S-adenosyl-L-methionine-binding positions include Asp-132 and 161–162 (DL).

The protein belongs to the UPF0677 family.

Exhibits S-adenosyl-L-methionine-dependent methyltransferase activity. This Mycobacterium ulcerans (strain Agy99) protein is Putative S-adenosyl-L-methionine-dependent methyltransferase MUL_4761.